The sequence spans 232 residues: GTP cyclohydrolase III (232 aa).

This sequence belongs to the archaeal-type GTP cyclohydrolase family.

It catalyses the reaction GTP + 3 H2O = 2-amino-5-formylamino-6-(5-phospho-D-ribosylamino)pyrimidin-4(3H)-one + 2 phosphate + 2 H(+). In terms of biological role, catalyzes the formation of 2-amino-5-formylamino-6-ribofuranosylamino-4(3H)-pyrimidinone ribonucleotide monophosphate and inorganic phosphate from GTP. Also has an independent pyrophosphate phosphohydrolase activity. This is GTP cyclohydrolase III from Saccharolobus islandicus (strain Y.G.57.14 / Yellowstone #1) (Sulfolobus islandicus).